The chain runs to 1483 residues: Chromosome partition protein MukB (1483 aa).

Residue 34–41 (GGNGAGKS) coordinates ATP. Coiled-coil stretches lie at residues 326–418 (LEAD…QYNQ), 444–480 (LETF…QAYQ), 509–601 (RHLA…MQRA), 780–804 (RAAC…FATL), 837–923 (EIRQ…AKLE), 977–1115 (EMLS…TAKA), and 1209–1265 (VEAI…LQNV). Positions 666-783 (PGGSEDQRLN…EVPLFGRAAC (118 aa)) are flexible hinge.

The protein belongs to the SMC family. MukB subfamily. As to quaternary structure, homodimerization via its hinge domain. Binds to DNA via its C-terminal region. Interacts, and probably forms a ternary complex, with MukE and MukF via its C-terminal region. The complex formation is stimulated by calcium or magnesium. Interacts with tubulin-related protein FtsZ.

It is found in the cytoplasm. It localises to the nucleoid. Plays a central role in chromosome condensation, segregation and cell cycle progression. Functions as a homodimer, which is essential for chromosome partition. Involved in negative DNA supercoiling in vivo, and by this means organize and compact chromosomes. May achieve or facilitate chromosome segregation by condensation DNA from both sides of a centrally located replisome during cell division. The sequence is that of Chromosome partition protein MukB from Shigella dysenteriae serotype 1 (strain Sd197).